The sequence spans 160 residues: Cytochrome b6-f complex subunit 4 (160 aa).

3 consecutive transmembrane segments (helical) span residues 36-56, 95-115, and 131-151; these read LLYV…GLAI, LLGV…PFIE, and TIFL…TMPI.

The protein belongs to the cytochrome b family. PetD subfamily. As to quaternary structure, the 4 large subunits of the cytochrome b6-f complex are cytochrome b6, subunit IV (17 kDa polypeptide, petD), cytochrome f and the Rieske protein, while the 4 small subunits are petG, petL, petM and petN. The complex functions as a dimer.

It localises to the plastid. Its subcellular location is the chloroplast thylakoid membrane. In terms of biological role, component of the cytochrome b6-f complex, which mediates electron transfer between photosystem II (PSII) and photosystem I (PSI), cyclic electron flow around PSI, and state transitions. This Porphyra purpurea (Red seaweed) protein is Cytochrome b6-f complex subunit 4.